The sequence spans 459 residues: MEEDYQQPRFTIGRQSSMAPEKIPEPSVHSEEEVFEDGEEIDGGVRLMYLANEGDIEGIKELIDSGIDANYRDIDDRTALHVAACQGLKDVVELLLDRKAEVDPKDRWGSTPFADAIFYKNIDVIKILEIHGAKHPMAPMHVKTAREVPEYEINPSELDFTQSKEITKGTYCMAMWRGIQVAVKKLDDEVLSDDDQVRKFHDELALLQRLRHPNIVQFLGAVTQSNPMMIVTEYLPRGDLRELLKRKGQLKPATAVRYALDIARGMSYLHEIKGDPIIHRDLEPSNILRDDSGHLKVADFGVSKLVTVKEDKPFTCQDISCRYIAPEVFTSEEYDTKADVFSFALIVQEMIEGRMPFAEKEDSEASEAYAGKHRPLFKAPSKNYPHGLKTLIEECWHEKPAKRPTFREIIKRLESILHHMGHKRQWRMRPLTCFQNFEHKKKHNWDLSSHDGSSSGSHL.

The interval 1 to 30 is disordered; the sequence is MEEDYQQPRFTIGRQSSMAPEKIPEPSVHS. ANK repeat units follow at residues 42–71, 75–104, and 108–137; these read DGGVRLMYLANEGDIEGIKELIDSGIDANY, DDRTALHVAACQGLKDVVELLLDRKAEVDP, and WGSTPFADAIFYKNIDVIKILEIHGAKHPM. In terms of domain architecture, Protein kinase spans 102-417; the sequence is VDPKDRWGST…EIIKRLESIL (316 aa). ATP is bound by residues 108–116 and Lys184; that span reads WGSTPFADA. Catalysis depends on Asp281, which acts as the Proton acceptor.

The protein belongs to the protein kinase superfamily. Ser/Thr protein kinase family. In terms of assembly, interacts with BLUS1, PHOT1 and PHOT2. As to expression, accumulates in leaves, stems, petioles and roots, especially in guard cells.

The protein localises to the cytoplasm. It localises to the cytosol. It catalyses the reaction L-seryl-[protein] + ATP = O-phospho-L-seryl-[protein] + ADP + H(+). It carries out the reaction L-threonyl-[protein] + ATP = O-phospho-L-threonyl-[protein] + ADP + H(+). Serine/threonine protein kinase that phosphorylates proteins on serine and threonine residues. Mediates blue light-dependent stomatal opening in guard cells by promoting plasma membrane-type ATPases (AHA1 and AHA2) phosphorylation. This Arabidopsis thaliana (Mouse-ear cress) protein is Serine/threonine-protein kinase 12.